The following is a 531-amino-acid chain: Glucose-6-phosphate exchanger SLC37A1 (531 aa).

Residues 18 to 38 (QWYRAFIFMLTFLLYASFHLS) form a helical membrane-spanning segment. The interval 53–72 (CTAGDGPESPFSDPSSSTRH) is disordered. The next 11 helical transmembrane spans lie at 100–120 (GALD…SGII), 129–149 (YLTF…LGYF), 157–177 (FYVV…PSVV), 192–214 (IMGI…AGYW), 222–242 (SFIV…LFLI), 332–352 (LCLL…PLYI), 364–384 (GELS…AGVI), 392–412 (ASTC…FSSV), 419–439 (ATIA…ALIT), 464–484 (AIID…AGLI), and 488–508 (GWSN…LFLV).

This sequence belongs to the major facilitator superfamily. Organophosphate:Pi antiporter (OPA) (TC 2.A.1.4) family.

The protein localises to the endoplasmic reticulum membrane. It carries out the reaction D-glucose 6-phosphate(in) + phosphate(out) = D-glucose 6-phosphate(out) + phosphate(in). Its activity is regulated as follows. Inhibited by vanadate but not by chlorogenic acid. Functionally, inorganic phosphate and glucose-6-phosphate antiporter. May transport cytoplasmic glucose-6-phosphate into the lumen of the endoplasmic reticulum and translocate inorganic phosphate into the opposite direction. Independent of a lumenal glucose-6-phosphatase. May not play a role in homeostatic regulation of blood glucose levels. This is Glucose-6-phosphate exchanger SLC37A1 from Mus musculus (Mouse).